A 208-amino-acid polypeptide reads, in one-letter code: MELKVLNVQGQEVKTISLNDSVWNVAPHKQAIYDTVISQQAALRQGTKKTKTRAEVRGGGKKPWRQKGTGRARQGSIRAPHWRGGGVTFGPTPDINYKKSVNKKVRALAFKSALSIKASEQNLVIVDKFDFAKPSTKEMISVMKNLQIDDQKTLIITKENEELVIKSSSNIKGVKTLPSIKLNVFDILNATKLVMTEEAAMAVEGVYA.

Positions 44 to 85 are disordered; that stretch reads RQGTKKTKTRAEVRGGGKKPWRQKGTGRARQGSIRAPHWRGG. The span at 59–70 shows a compositional bias: basic residues; it reads GGKKPWRQKGTG.

The protein belongs to the universal ribosomal protein uL4 family. As to quaternary structure, part of the 50S ribosomal subunit.

Functionally, one of the primary rRNA binding proteins, this protein initially binds near the 5'-end of the 23S rRNA. It is important during the early stages of 50S assembly. It makes multiple contacts with different domains of the 23S rRNA in the assembled 50S subunit and ribosome. Forms part of the polypeptide exit tunnel. This Mesoplasma florum (strain ATCC 33453 / NBRC 100688 / NCTC 11704 / L1) (Acholeplasma florum) protein is Large ribosomal subunit protein uL4.